The chain runs to 360 residues: sn-glycerol-3-phosphate import ATP-binding protein UgpC (360 aa).

Positions 4–235 constitute an ABC transporter domain; sequence LSLKGVKKSY…PATTFVASFI (232 aa). 37–44 contacts ATP; the sequence is GPSGCGKS.

Belongs to the ABC transporter superfamily. sn-glycerol-3-phosphate importer (TC 3.A.1.1.3) family. As to quaternary structure, the complex is composed of two ATP-binding proteins (UgpC), two transmembrane proteins (UgpA and UgpE) and a solute-binding protein (UgpB).

Its subcellular location is the cell inner membrane. The enzyme catalyses sn-glycerol 3-phosphate(out) + ATP + H2O = sn-glycerol 3-phosphate(in) + ADP + phosphate + H(+). Its function is as follows. Part of the ABC transporter complex UgpBAEC involved in sn-glycerol-3-phosphate (G3P) import. Responsible for energy coupling to the transport system. This is sn-glycerol-3-phosphate import ATP-binding protein UgpC from Burkholderia mallei (strain ATCC 23344).